The sequence spans 823 residues: Ankyrin repeat domain-containing protein 20B (823 aa).

ANK repeat units lie at residues 32 to 65 (SELQKIHRAAVKGDAAEVERCLARRSGDLDARDK), 66 to 95 (QHRTALHLACASGHVQVVTLLVNRKCQIDI), 99 to 128 (ENRTPLIQAVHCQEEACAVILLKHGANPNL), 132 to 161 (YGNTALHYAVYSESTSLAEKLLSHGAHIEA), 165 to 194 (DSNTPLLFAIICKKEKMVEFLLKKKASTHA), and 198 to 227 (LRRSALMLAVYYDSPGIVSILLKQNIDVFA). Disordered regions lie at residues 302-343 (PEKV…GVED) and 355-401 (VQTL…QLSE). The span at 372–382 (QERHERSEKKQ) shows a compositional bias: basic and acidic residues. Coiled coils occupy residues 431–480 (KKLK…KQLE), 565–724 (EMIT…NNST), and 776–805 (LVLEEKSKKLMNECDHLKESLFQYEREKAE).

In Homo sapiens (Human), this protein is Ankyrin repeat domain-containing protein 20B (ANKRD20A8P).